A 685-amino-acid chain; its full sequence is Threonine--tRNA ligase (685 aa).

Residues 1-65 enclose the TGS domain; it reads MSTPASAAPA…DTDVEVEPVA (65 aa). Positions 262 to 568 are catalytic; that stretch reads DHRKLGSELD…LTEHYAGAFP (307 aa). The Zn(2+) site is built by Cys367, His418, and His545.

This sequence belongs to the class-II aminoacyl-tRNA synthetase family. In terms of assembly, homodimer. Zn(2+) is required as a cofactor.

It localises to the cytoplasm. The enzyme catalyses tRNA(Thr) + L-threonine + ATP = L-threonyl-tRNA(Thr) + AMP + diphosphate + H(+). Its function is as follows. Catalyzes the attachment of threonine to tRNA(Thr) in a two-step reaction: L-threonine is first activated by ATP to form Thr-AMP and then transferred to the acceptor end of tRNA(Thr). Also edits incorrectly charged L-seryl-tRNA(Thr). The chain is Threonine--tRNA ligase from Rhodococcus jostii (strain RHA1).